We begin with the raw amino-acid sequence, 236 residues long: uncharacterized protein (236 aa).

It belongs to the HyuE racemase family.

It localises to the cytoplasm. This is an uncharacterized protein from Schizosaccharomyces pombe (strain 972 / ATCC 24843) (Fission yeast).